The sequence spans 414 residues: Serine hydroxymethyltransferase (414 aa).

Residues L118 and 122-124 (GHL) contribute to the (6S)-5,6,7,8-tetrahydrofolate site. An N6-(pyridoxal phosphate)lysine modification is found at K227. (6S)-5,6,7,8-tetrahydrofolate-binding positions include E240 and 350 to 352 (SPF).

This sequence belongs to the SHMT family. As to quaternary structure, homodimer. Pyridoxal 5'-phosphate serves as cofactor.

It is found in the cytoplasm. It carries out the reaction (6R)-5,10-methylene-5,6,7,8-tetrahydrofolate + glycine + H2O = (6S)-5,6,7,8-tetrahydrofolate + L-serine. It participates in one-carbon metabolism; tetrahydrofolate interconversion. The protein operates within amino-acid biosynthesis; glycine biosynthesis; glycine from L-serine: step 1/1. In terms of biological role, catalyzes the reversible interconversion of serine and glycine with tetrahydrofolate (THF) serving as the one-carbon carrier. This reaction serves as the major source of one-carbon groups required for the biosynthesis of purines, thymidylate, methionine, and other important biomolecules. Also exhibits THF-independent aldolase activity toward beta-hydroxyamino acids, producing glycine and aldehydes, via a retro-aldol mechanism. The sequence is that of Serine hydroxymethyltransferase from Bacillus thuringiensis (strain Al Hakam).